The following is a 456-amino-acid chain: Major facilitator superfamily domain-containing protein 10 (456 aa).

Helical transmembrane passes span 25–45 (VIIV…LLLP), 87–107 (VLFG…SAPL), and 114–136 (YLGR…AVWA). The N-linked (GlcNAc...) asparagine glycan is linked to Asn-159. 8 consecutive transmembrane segments (helical) span residues 179 to 199 (AVIG…GAFL), 203 to 223 (MVPW…FCFL), 278 to 298 (LVYF…SFLA), 311 to 328 (KMFF…GTYA), 345 to 365 (LLLV…TLGL), 366 to 386 (GLML…TMVS), 403 to 423 (SLGA…YWLT), and 424 to 444 (GAQV…LLLW).

Belongs to the major facilitator superfamily. Esxpressed in luminal membrane of renal tubules. Expressed at the surface of eosinophils (at protein level).

The protein localises to the nucleus inner membrane. It localises to the cell membrane. Its function is as follows. Probable organic anion transporter which may serve as a transporter for some non-steroidal anti-inflammatory drugs (NSAIDs) as well as other organic anions across the luminal membranes of renal proximal tubules at the final excretion step into the urine. This chain is Major facilitator superfamily domain-containing protein 10 (Mfsd10), found in Mus musculus (Mouse).